A 493-amino-acid chain; its full sequence is Transcript termination protein OPG145 (493 aa).

The 157-residue stretch at 100-256 (MIKLKRPLYI…NSIINIAKLS (157 aa)) folds into the Helicase ATP-binding domain. 113–120 (LACGFGKT) is a binding site for ATP. Positions 206-209 (DESH) match the DESH box motif.

The protein belongs to the helicase family. Poxviruses subfamily. As to quaternary structure, interacts with OPG087. Might be part of a transcription complex composed at least of OPG087, OPG110, and OPG145.

The protein resides in the virion. DNA helicase which seems to act as a postreplicative transcription termination factor. Involved in ATP-dependent release of nascent RNA. Forms a stable complex with single-stranded DNA, and to a lesser extent RNA. The chain is Transcript termination protein OPG145 (OPG145) from Variola virus (isolate Human/India/Ind3/1967) (VARV).